Reading from the N-terminus, the 465-residue chain is Chromosomal replication initiator protein DnaA (465 aa).

The tract at residues 1–84 is domain I, interacts with DnaA modulators; it reads MSLSLWQQCL…RFEVGSKPLV (84 aa). The domain II stretch occupies residues 84-128; that stretch reads VQAISQPAQPHHKQVSAAPQQQVRSAPVRPSWDNSPAQAEHTYRS. The tract at residues 91-120 is disordered; sequence AQPHHKQVSAAPQQQVRSAPVRPSWDNSPA. The segment at 129 to 345 is domain III, AAA+ region; it reads NVNPKHTFDN…GALNRVIANA (217 aa). The ATP site is built by glycine 173, glycine 175, lysine 176, and threonine 177. The interval 346-465 is domain IV, binds dsDNA; that stretch reads NFTGRSITID…FSNLIRTLSS (120 aa).

The protein belongs to the DnaA family. As to quaternary structure, oligomerizes as a right-handed, spiral filament on DNA at oriC.

It is found in the cytoplasm. Functionally, plays an essential role in the initiation and regulation of chromosomal replication. ATP-DnaA binds to the origin of replication (oriC) to initiate formation of the DNA replication initiation complex once per cell cycle. Binds the DnaA box (a 9 base pair repeat at the origin) and separates the double-stranded (ds)DNA. Forms a right-handed helical filament on oriC DNA; dsDNA binds to the exterior of the filament while single-stranded (ss)DNA is stabiized in the filament's interior. The ATP-DnaA-oriC complex binds and stabilizes one strand of the AT-rich DNA unwinding element (DUE), permitting loading of DNA polymerase. After initiation quickly degrades to an ADP-DnaA complex that is not apt for DNA replication. Binds acidic phospholipids. The protein is Chromosomal replication initiator protein DnaA of Pectobacterium carotovorum subsp. carotovorum (strain PC1).